The following is a 416-amino-acid chain: Tryptophan synthase beta chain (416 aa).

An N6-(pyridoxal phosphate)lysine modification is found at Lys-98.

The protein belongs to the TrpB family. Tetramer of two alpha and two beta chains. Pyridoxal 5'-phosphate is required as a cofactor.

It catalyses the reaction (1S,2R)-1-C-(indol-3-yl)glycerol 3-phosphate + L-serine = D-glyceraldehyde 3-phosphate + L-tryptophan + H2O. It functions in the pathway amino-acid biosynthesis; L-tryptophan biosynthesis; L-tryptophan from chorismate: step 5/5. The beta subunit is responsible for the synthesis of L-tryptophan from indole and L-serine. This chain is Tryptophan synthase beta chain, found in Ruegeria pomeroyi (strain ATCC 700808 / DSM 15171 / DSS-3) (Silicibacter pomeroyi).